Here is a 182-residue protein sequence, read N- to C-terminus: Ribosome-recycling factor (182 aa).

It belongs to the RRF family.

It is found in the cytoplasm. Its function is as follows. Responsible for the release of ribosomes from messenger RNA at the termination of protein biosynthesis. May increase the efficiency of translation by recycling ribosomes from one round of translation to another. The sequence is that of Ribosome-recycling factor from Prochlorococcus marinus subsp. pastoris (strain CCMP1986 / NIES-2087 / MED4).